We begin with the raw amino-acid sequence, 148 residues long: Cysteine proteinase inhibitor 5 (148 aa).

The signal sequence occupies residues 1–25 (MASKLYYAVAPLVLVLLLLAPLSSA). The short motif at 99–103 (QVVSG) is the Secondary area of contact element.

This sequence belongs to the cystatin family. Phytocystatin subfamily.

The protein resides in the secreted. Functionally, specific inhibitor of cysteine proteinases. Probably involved in the regulation of endogenous processes and in defense against pests and pathogens. This chain is Cysteine proteinase inhibitor 5, found in Oryza sativa subsp. japonica (Rice).